The sequence spans 1086 residues: NAD(P) transhydrogenase, mitochondrial (1086 aa).

The N-terminal 43 residues, 1-43 (MANLLKTVVTGCSCPFLSNLGSCKVLPGKKNFLRTFHTHRILW), are a transit peptide targeting the mitochondrion. The Mitochondrial matrix portion of the chain corresponds to 44-474 (CSAPVKPGIP…TITPFRKTMT (431 aa)). N6-acetyllysine is present on Lys70. Lys117 carries the N6-succinyllysine modification. 182–184 (RVT) provides a ligand contact to NAD(+). Position 224 is an N6-succinyllysine (Lys224). Residues Val237, 257–259 (DTR), and Gly287 each bind NAD(+). Residue Lys294 is modified to N6-succinyllysine. Residues Glu300 and Leu319 each coordinate NAD(+). Lys331 is subject to N6-succinyllysine. An N6-acetyllysine modification is found at Lys397. 4 helical membrane-spanning segments follow: residues 475-493 (SASV…GIAA), 501-521 (MVTT…GVTP), 527-546 (LMSV…LVLM), and 558-578 (GLAA…FLVT). Residues 579 to 595 (QRMLDMFKRPTDPPEYN) are Mitochondrial matrix-facing. The next 5 membrane-spanning stretches (helical) occupy residues 596 to 616 (YLYL…LYSG), 622 to 642 (IMYL…STQG), 646 to 666 (LGNA…LGGL), 672 to 691 (LLAQ…LTIA), and 702 to 722 (LVAA…IAEY). At 723-739 (IIEYPHFATDAAANLTK) the chain is on the cytoplasmic side. A run of 5 helical transmembrane segments spans residues 740–760 (IVAY…LVAY), 778–797 (HLLN…PFMM), 801–819 (FTTG…AVMG), 833–853 (VVIT…GFLL), and 857–879 (LLTI…MCVA). The Mitochondrial matrix portion of the chain corresponds to 880 to 1086 (MNRSLANVIL…QAKVRESYQK (207 aa)). Residues Tyr933, 965–970 (VAGRMP), 1009–1011 (NDT), 1026–1027 (GM), 1042–1049 (KRSLGVGY), and 1068–1069 (DA) contribute to the NADP(+) site. N6-succinyllysine is present on Lys1079.

This sequence in the N-terminal section; belongs to the AlaDH/PNT family. It in the C-terminal section; belongs to the PNT beta subunit family. In terms of assembly, homodimer.

The protein localises to the mitochondrion inner membrane. The enzyme catalyses NAD(+) + NADPH + H(+)(in) = NADH + NADP(+) + H(+)(out). The transhydrogenation between NADH and NADP is coupled to respiration and ATP hydrolysis and functions as a proton pump across the membrane. May play a role in reactive oxygen species (ROS) detoxification in the adrenal gland. This chain is NAD(P) transhydrogenase, mitochondrial (NNT), found in Bos taurus (Bovine).